The sequence spans 583 residues: Penicillin-binding protein activator LpoA (583 aa).

The first 24 residues, M1–A24, serve as a signal peptide directing secretion. C25 carries the N-palmitoyl cysteine lipid modification. C25 carries S-diacylglycerol cysteine lipidation.

Belongs to the LpoA family. Interacts with PBP1a.

It localises to the cell outer membrane. In terms of biological role, regulator of peptidoglycan synthesis that is essential for the function of penicillin-binding protein 1A (PBP1a). This Haemophilus ducreyi (strain 35000HP / ATCC 700724) protein is Penicillin-binding protein activator LpoA.